Here is a 282-residue protein sequence, read N- to C-terminus: Undecaprenyl-diphosphatase (282 aa).

The next 7 membrane-spanning stretches (helical) occupy residues 39–59 (PGAA…LIYF), 85–105 (ATMG…GLLF), 115–135 (SLYW…LTEV), 153–173 (IGWK…IPGS), 196–216 (FSFL…LYET), 230–250 (LLVA…FLIT), and 260–280 (FIIY…TGAI).

It belongs to the UppP family.

The protein resides in the cell inner membrane. The catalysed reaction is di-trans,octa-cis-undecaprenyl diphosphate + H2O = di-trans,octa-cis-undecaprenyl phosphate + phosphate + H(+). Its function is as follows. Catalyzes the dephosphorylation of undecaprenyl diphosphate (UPP). Confers resistance to bacitracin. The chain is Undecaprenyl-diphosphatase from Chlorobium chlorochromatii (strain CaD3).